We begin with the raw amino-acid sequence, 290 residues long: 4-hydroxy-tetrahydrodipicolinate synthase (290 aa).

Pyruvate is bound at residue Thr42. The active-site Proton donor/acceptor is the Tyr129. Residue Lys157 is the Schiff-base intermediate with substrate of the active site. Residue Ile198 participates in pyruvate binding.

It belongs to the DapA family. In terms of assembly, homotetramer; dimer of dimers.

The protein localises to the cytoplasm. It carries out the reaction L-aspartate 4-semialdehyde + pyruvate = (2S,4S)-4-hydroxy-2,3,4,5-tetrahydrodipicolinate + H2O + H(+). Its pathway is amino-acid biosynthesis; L-lysine biosynthesis via DAP pathway; (S)-tetrahydrodipicolinate from L-aspartate: step 3/4. Catalyzes the condensation of (S)-aspartate-beta-semialdehyde [(S)-ASA] and pyruvate to 4-hydroxy-tetrahydrodipicolinate (HTPA). The protein is 4-hydroxy-tetrahydrodipicolinate synthase of Chlamydia felis (strain Fe/C-56) (Chlamydophila felis).